The sequence spans 208 residues: Endoplasmic reticulum vesicle protein 25 (208 aa).

The signal sequence occupies residues 1-15; it reads MKFLLLLLLAPFISA. Residues 16–177 are Lumenal-facing; sequence LRFDLKAESK…TNESTNERVR (162 aa). The GOLD domain maps to 28-118; sequence QMCIRDFVSE…KRAIELDIES (91 aa). Residues 178–198 form a helical membrane-spanning segment; it reads NFSVLVIIVLTSLGAWQVNYL. Residues 199–208 lie on the Cytoplasmic side of the membrane; sequence KNYFKSKHII.

The protein belongs to the EMP24/GP25L family.

The protein localises to the endoplasmic reticulum membrane. It is found in the golgi apparatus membrane. Constituent of COPII-coated endoplasmic reticulum-derived transport vesicles. Required for efficient transport of a subset of secretory proteins to the Golgi. Facilitates retrograde transport from the Golgi to the endoplasmic reticulum. In Candida glabrata (strain ATCC 2001 / BCRC 20586 / JCM 3761 / NBRC 0622 / NRRL Y-65 / CBS 138) (Yeast), this protein is Endoplasmic reticulum vesicle protein 25 (ERV25).